A 210-amino-acid polypeptide reads, in one-letter code: Small ribosomal subunit protein uS3 (210 aa).

Residues 38 to 106 (IRAWLKKRLA…EVQINIVEIR (69 aa)) form the KH type-2 domain.

The protein belongs to the universal ribosomal protein uS3 family. In terms of assembly, part of the 30S ribosomal subunit. Forms a tight complex with proteins S10 and S14.

Binds the lower part of the 30S subunit head. Binds mRNA in the 70S ribosome, positioning it for translation. This chain is Small ribosomal subunit protein uS3, found in Magnetococcus marinus (strain ATCC BAA-1437 / JCM 17883 / MC-1).